Reading from the N-terminus, the 283-residue chain is Release factor glutamine methyltransferase (283 aa).

Residues 121–125, aspartate 144, and asparagine 188 contribute to the S-adenosyl-L-methionine site; that span reads GTGSG. Substrate is bound at residue 188 to 191; it reads NPPY.

This sequence belongs to the protein N5-glutamine methyltransferase family. PrmC subfamily.

It carries out the reaction L-glutaminyl-[peptide chain release factor] + S-adenosyl-L-methionine = N(5)-methyl-L-glutaminyl-[peptide chain release factor] + S-adenosyl-L-homocysteine + H(+). Functionally, methylates the class 1 translation termination release factors RF1/PrfA and RF2/PrfB on the glutamine residue of the universally conserved GGQ motif. The polypeptide is Release factor glutamine methyltransferase (Bacillus cereus (strain ATCC 14579 / DSM 31 / CCUG 7414 / JCM 2152 / NBRC 15305 / NCIMB 9373 / NCTC 2599 / NRRL B-3711)).